The chain runs to 203 residues: Urease accessory protein UreG (203 aa).

11–18 provides a ligand contact to GTP; sequence GPVGSGKT.

The protein belongs to the SIMIBI class G3E GTPase family. UreG subfamily. Homodimer. UreD, UreF and UreG form a complex that acts as a GTP-hydrolysis-dependent molecular chaperone, activating the urease apoprotein by helping to assemble the nickel containing metallocenter of UreC. The UreE protein probably delivers the nickel.

It localises to the cytoplasm. Functionally, facilitates the functional incorporation of the urease nickel metallocenter. This process requires GTP hydrolysis, probably effectuated by UreG. The protein is Urease accessory protein UreG of Prochlorococcus marinus (strain MIT 9215).